The primary structure comprises 634 residues: DNA gyrase subunit B (634 aa).

The region spanning 416–530 (REIYIVEGDS…NGHVYIAMPP (115 aa)) is the Toprim domain. Mg(2+)-binding residues include glutamate 422, aspartate 495, and aspartate 497.

It belongs to the type II topoisomerase GyrB family. Heterotetramer, composed of two GyrA and two GyrB chains. In the heterotetramer, GyrA contains the active site tyrosine that forms a transient covalent intermediate with DNA, while GyrB binds cofactors and catalyzes ATP hydrolysis. Requires Mg(2+) as cofactor. It depends on Mn(2+) as a cofactor. The cofactor is Ca(2+).

The protein resides in the cytoplasm. It carries out the reaction ATP-dependent breakage, passage and rejoining of double-stranded DNA.. Its function is as follows. A type II topoisomerase that negatively supercoils closed circular double-stranded (ds) DNA in an ATP-dependent manner to modulate DNA topology and maintain chromosomes in an underwound state. Negative supercoiling favors strand separation, and DNA replication, transcription, recombination and repair, all of which involve strand separation. Also able to catalyze the interconversion of other topological isomers of dsDNA rings, including catenanes and knotted rings. Type II topoisomerases break and join 2 DNA strands simultaneously in an ATP-dependent manner. The polypeptide is DNA gyrase subunit B (Borrelia hermsii).